A 434-amino-acid polypeptide reads, in one-letter code: Tol-Pal system protein TolB (434 aa).

The first 24 residues, 1–24 (MKFSAYLTTLFIVLFSLFIQTVQA), serve as a signal peptide directing secretion.

Belongs to the TolB family. As to quaternary structure, the Tol-Pal system is composed of five core proteins: the inner membrane proteins TolA, TolQ and TolR, the periplasmic protein TolB and the outer membrane protein Pal. They form a network linking the inner and outer membranes and the peptidoglycan layer.

The protein localises to the periplasm. Part of the Tol-Pal system, which plays a role in outer membrane invagination during cell division and is important for maintaining outer membrane integrity. The polypeptide is Tol-Pal system protein TolB (Histophilus somni (strain 129Pt) (Haemophilus somnus)).